The chain runs to 175 residues: MLTSGVILLNGGLLSPNPGLIFWTTVSFVIVLLILRKLAWGPIISALEEREKGIQSSIDRAHKAKDEAEEILRKNRELLAKADAESDKIIREGKEYGEKLRAGIAEKAQAEAAKMISMAKEEIEQEKRRALDVLRNEVAELAVMGAEKIIKTSLDADMQKKIVDSMIQDLSTKRN.

Residues leucine 14 to isoleucine 34 form a helical membrane-spanning segment.

The protein belongs to the ATPase B chain family. F-type ATPases have 2 components, F(1) - the catalytic core - and F(0) - the membrane proton channel. F(1) has five subunits: alpha(3), beta(3), gamma(1), delta(1), epsilon(1). F(0) has four main subunits: a(1), b(2) and c(10-14). The alpha and beta chains form an alternating ring which encloses part of the gamma chain. F(1) is attached to F(0) by a central stalk formed by the gamma and epsilon chains, while a peripheral stalk is formed by the delta and b chains.

It localises to the cell inner membrane. Its function is as follows. F(1)F(0) ATP synthase produces ATP from ADP in the presence of a proton or sodium gradient. F-type ATPases consist of two structural domains, F(1) containing the extramembraneous catalytic core and F(0) containing the membrane proton channel, linked together by a central stalk and a peripheral stalk. During catalysis, ATP synthesis in the catalytic domain of F(1) is coupled via a rotary mechanism of the central stalk subunits to proton translocation. Component of the F(0) channel, it forms part of the peripheral stalk, linking F(1) to F(0). The polypeptide is ATP synthase subunit b (Chlorobium phaeobacteroides (strain DSM 266 / SMG 266 / 2430)).